The sequence spans 84 residues: MAKSNKRRPAPEKPVKTRKCVFCAKKDQAIDYKDTALLRTYISERGKIRARRVTGNCVQHQRDIALAVKNAREVALLPFTSSAR.

The protein belongs to the bacterial ribosomal protein bS18 family. Part of the 30S ribosomal subunit. Forms a tight heterodimer with protein bS6.

Binds as a heterodimer with protein bS6 to the central domain of the 16S rRNA, where it helps stabilize the platform of the 30S subunit. This Mycobacterium marinum (strain ATCC BAA-535 / M) protein is Small ribosomal subunit protein bS18A.